The primary structure comprises 380 residues: XK-related protein 9 (380 aa).

Helical transmembrane passes span 10–30 (LLSAAGLVMYVADVCTDAALV), 39–59 (VVCAALTLLFIVVGLLVTQVF), 81–101 (LPVVSKRGLATLHLFGVGIFI), 167–187 (CSLVQLVGMSFSFMNAAWALV), 228–248 (ALLLIFSIYSTVGLAIVWLLG), 264–284 (SLEFLYRAIVGVILTFTFFNV), 294–314 (ITYYFLHSLINVLSLLLLFVL), and 329–349 (TLMAACSVLGLVCLVLYYLLL).

This sequence belongs to the XK family.

The protein resides in the cell membrane. The catalysed reaction is a 1,2-diacyl-sn-glycero-3-phospho-L-serine(in) = a 1,2-diacyl-sn-glycero-3-phospho-L-serine(out). Its function is as follows. Phospholipid scramblase that promotes phosphatidylserine exposure on apoptotic cell surface. Phosphatidylserine is a specific marker only present at the surface of apoptotic cells and acts as a specific signal for engulfment. The protein is XK-related protein 9 of Tetraodon nigroviridis (Spotted green pufferfish).